Here is a 2148-residue protein sequence, read N- to C-terminus: Polyketide synthase 1 (2148 aa).

The interval 19 to 261 is N-terminal acylcarrier protein transacylase domain (SAT); sequence FIFGDQSSCN…TPLAVHAPYH (243 aa). Residues 394–829 enclose the Ketosynthase family 3 (KS3) domain; sequence ESKIAIIGMS…GGNTALLVED (436 aa). Catalysis depends on for beta-ketoacyl synthase activity residues cysteine 566, histidine 701, and histidine 745. Residues 929–1233 are malonyl-CoA:ACP transacylase (MAT) domain; that stretch reads AFVFSGQGSQ…PSLMRNKDGW (305 aa). Serine 1018 functions as the For acyl/malonyl transferase activity in the catalytic mechanism. The product template (PT) domain stretch occupies residues 1310 to 1624; that stretch reads TASVHRIVHE…RKVLNTAMPP (315 aa). Positions 1314 to 1447 are N-terminal hotdog fold; it reads HRIVHESVEK…SSLHFEQPKV (134 aa). The PKS/mFAS DH domain occupies 1314–1619; the sequence is HRIVHESVEK…FQGIPRKVLN (306 aa). The active-site Proton acceptor; for dehydratase activity is histidine 1346. A C-terminal hotdog fold region spans residues 1474-1619; that stretch reads LNSRMSSGVI…FQGIPRKVLN (146 aa). Aspartate 1533 serves as the catalytic Proton donor; for dehydratase activity. The disordered stretch occupies residues 1619–1655; that stretch reads NTAMPPPKSQNEAPVRSGPAKPAAKPPRSASSEHSGH. The segment covering 1634-1650 has biased composition (low complexity); that stretch reads RSGPAKPAAKPPRSASS. Residues 1678 to 1752 enclose the Carrier 1 domain; the sequence is RNPMLPVFKI…DLAAHLGLDT (75 aa). Serine 1712 is modified (O-(pantetheine 4'-phosphoryl)serine). Low complexity-rich tracts occupy residues 1757 to 1769 and 1779 to 1796; these read QSSG…GGLS and TSSV…SVSG. Residues 1757–1796 form a disordered region; that stretch reads QSSGQSSSFGGLSPRSDSIGEITSSVTTPPSLSPRSSVSG. Positions 1793 to 1870 constitute a Carrier 2 domain; that stretch reads SVSGSQCKDV…SFKHMFQQGH (78 aa). At serine 1830 the chain carries O-(pantetheine 4'-phosphoryl)serine. Residues 1882–2146 are thioesterase (TE) domain; the sequence is LKQYRATSTL…ERVAAFIRST (265 aa). Serine 1973 acts as the For thioesterase activity in catalysis.

Functionally, polyketide synthase; part of the Pks1 gene cluster that mediates the biosynthesis of an anthraquinone derivative pigment that contributes to conidial pigmentation that provides protection from UV radiation, heat and cold stress. The polyketide synthase Pks1 produces 1-acetyl-2,4,6,8-tetrahydroxy-9,10-anthraquinone though condensation of acetyl-CoA with malonyl-CoA. The dehydratase EthD and the laccase Mlac1 further convert the anthraquinone derivative into the final conidial pigment. This is Polyketide synthase 1 from Metarhizium anisopliae (strain ARSEF 549).